A 151-amino-acid polypeptide reads, in one-letter code: Pollen allergen Sal k 5.0101 (151 aa).

3 disulfide bridges follow: Cys17-Cys88, Cys20-Cys132, and Cys41-Cys76. Asn43 is a glycosylation site (N-linked (GlcNAc...) asparagine).

The protein belongs to the Ole e I family. In terms of processing, N-glycosylated. Contains fucose monosaccharides in the glycan structure. In terms of tissue distribution, expressed in pollen (at protein level).

The protein localises to the secreted. The sequence is that of Pollen allergen Sal k 5.0101 from Kali turgidum (Prickly saltwort).